Here is a 273-residue protein sequence, read N- to C-terminus: Putative pyruvate, phosphate dikinase regulatory protein 2 (273 aa).

151 to 158 (GISRTSKT) lines the ADP pocket.

The protein belongs to the pyruvate, phosphate/water dikinase regulatory protein family. PDRP subfamily.

It carries out the reaction N(tele)-phospho-L-histidyl/L-threonyl-[pyruvate, phosphate dikinase] + ADP = N(tele)-phospho-L-histidyl/O-phospho-L-threonyl-[pyruvate, phosphate dikinase] + AMP + H(+). The catalysed reaction is N(tele)-phospho-L-histidyl/O-phospho-L-threonyl-[pyruvate, phosphate dikinase] + phosphate + H(+) = N(tele)-phospho-L-histidyl/L-threonyl-[pyruvate, phosphate dikinase] + diphosphate. Bifunctional serine/threonine kinase and phosphorylase involved in the regulation of the pyruvate, phosphate dikinase (PPDK) by catalyzing its phosphorylation/dephosphorylation. The polypeptide is Putative pyruvate, phosphate dikinase regulatory protein 2 (Staphylococcus saprophyticus subsp. saprophyticus (strain ATCC 15305 / DSM 20229 / NCIMB 8711 / NCTC 7292 / S-41)).